We begin with the raw amino-acid sequence, 101 residues long: Small ribosomal subunit protein uS14 (101 aa).

Belongs to the universal ribosomal protein uS14 family. Part of the 30S ribosomal subunit. Contacts proteins S3 and S10.

Its function is as follows. Binds 16S rRNA, required for the assembly of 30S particles and may also be responsible for determining the conformation of the 16S rRNA at the A site. The protein is Small ribosomal subunit protein uS14 of Dechloromonas aromatica (strain RCB).